A 167-amino-acid chain; its full sequence is Thioredoxin M-type, chloroplastic (167 aa).

Residues 1 to 53 (MAMETCFRAWALHAPAGSKDRLLVGNLVLPSKRALAPLSVGRVATRRPRHVCQ) constitute a chloroplast transit peptide. Residues 54 to 165 (SKNAVDEVVV…LTTLIDKYIG (112 aa)) enclose the Thioredoxin domain. Cysteine 89 and cysteine 92 are joined by a disulfide.

It belongs to the thioredoxin family. Plant M-type subfamily. As to quaternary structure, forms a complex with heterodimeric ferredoxin-thioredoxin reductase (FTR) and ferredoxin.

The protein resides in the plastid. The protein localises to the chloroplast. Functionally, participates in various redox reactions through the reversible oxidation of the active center dithiol to a disulfide. The M form is known to activate NADP-malate dehydrogenase. This is Thioredoxin M-type, chloroplastic (TRM1) from Zea mays (Maize).